A 445-amino-acid polypeptide reads, in one-letter code: mRNA cleavage and polyadenylation factor CLP1 (445 aa).

ATP-binding positions include aspartate 33, lysine 72, and 133 to 138; that span reads QTGKTS.

It belongs to the Clp1 family. Clp1 subfamily. Component of the cleavage factor IA (CF IA) complex, which is a heterohexameric complex with 2:2:1:1 stoichiometry of RNA14, RNA15, PCF11 and CLP1. It contains 2 copies of an RNA14-RNA15 dimer and 1 copy of CLP1-PCF11. The complex interacts with the cleavage factor HRB1/CF IB to form the cleavage factor I (CF I) complex, and binds to RNA. Interacts directly with PCF11. Interacts with the CPF components CFT1, PTA1, PFS2, YSH1 and SSU72.

The protein localises to the nucleus. Component of the cleavage factor IA (CF IA) complex, which is involved in the endonucleolytic cleavage during polyadenylation-dependent pre-mRNA 3'-end formation. Associates with HRB1/CF IB to form the cleavage factor I (CF I) complex. CF I is required for correct positioning of a larger protein complex, the cleavage and polyadenylation factor (CPF) complex, which contains the catalytic subunits executing mRNA cleavage and polyadenylation. CLP1 mediates interactions between CF IA and CPF factors. CLP1 is also involved in maintaining the CF IA interaction with the C-terminal domain of RNA Pol II largest subunit via PCF11, which links pre-mRNA 3'-end processing to transcription termination. In Saccharomyces cerevisiae (strain YJM789) (Baker's yeast), this protein is mRNA cleavage and polyadenylation factor CLP1.